Reading from the N-terminus, the 192-residue chain is Peptidyl-tRNA hydrolase (192 aa).

His17 serves as a coordination point for tRNA. The Proton acceptor role is filled by His22. TRNA is bound by residues Phe68, Asn70, and Asn116.

It belongs to the PTH family. Monomer.

It is found in the cytoplasm. The catalysed reaction is an N-acyl-L-alpha-aminoacyl-tRNA + H2O = an N-acyl-L-amino acid + a tRNA + H(+). In terms of biological role, hydrolyzes ribosome-free peptidyl-tRNAs (with 1 or more amino acids incorporated), which drop off the ribosome during protein synthesis, or as a result of ribosome stalling. Its function is as follows. Catalyzes the release of premature peptidyl moieties from peptidyl-tRNA molecules trapped in stalled 50S ribosomal subunits, and thus maintains levels of free tRNAs and 50S ribosomes. This chain is Peptidyl-tRNA hydrolase, found in Xylella fastidiosa (strain 9a5c).